The sequence spans 430 residues: Adenylosuccinate synthetase (430 aa).

Residues 12 to 18 (GDEGKGK) and 40 to 42 (GHT) contribute to the GTP site. The active-site Proton acceptor is the D13. Mg(2+) contacts are provided by D13 and G40. Residues 13–16 (DEGK), 38–41 (NAGH), T130, R144, Q224, T239, and R303 contribute to the IMP site. Residue H41 is the Proton donor of the active site. 299-305 (TNTGRPR) is a binding site for substrate. GTP is bound by residues R305, 331 to 333 (KLD), and 413 to 415 (STS).

Belongs to the adenylosuccinate synthetase family. In terms of assembly, homodimer. It depends on Mg(2+) as a cofactor.

It localises to the cytoplasm. It carries out the reaction IMP + L-aspartate + GTP = N(6)-(1,2-dicarboxyethyl)-AMP + GDP + phosphate + 2 H(+). It participates in purine metabolism; AMP biosynthesis via de novo pathway; AMP from IMP: step 1/2. Functionally, plays an important role in the de novo pathway of purine nucleotide biosynthesis. Catalyzes the first committed step in the biosynthesis of AMP from IMP. The protein is Adenylosuccinate synthetase of Rhodopseudomonas palustris (strain HaA2).